Here is a 173-residue protein sequence, read N- to C-terminus: Photosystem I assembly protein Ycf3 (173 aa).

TPR repeat units follow at residues 35–68 (AFAY…EDDP), 72–105 (SYIL…NPRM), and 120–153 (GEKA…APNN).

Belongs to the Ycf3 family.

It is found in the cellular thylakoid membrane. In terms of biological role, essential for the assembly of the photosystem I (PSI) complex. May act as a chaperone-like factor to guide the assembly of the PSI subunits. This is Photosystem I assembly protein Ycf3 from Trichodesmium erythraeum (strain IMS101).